Consider the following 222-residue polypeptide: Germin-like protein subfamily 1 member 13 (222 aa).

Residues 1–18 (MRVSKSLILITLSALVIS) form the signal peptide. An intrachain disulfide couples C32 to C49. The region spanning 63–214 (SGLNQAGSTN…AFQLDVNIVE (152 aa)) is the Cupin type-1 domain. Residue N78 is glycosylated (N-linked (GlcNAc...) asparagine). Mn(2+)-binding residues include H111, H113, E118, and H160.

This sequence belongs to the germin family. In terms of assembly, oligomer (believed to be a pentamer but probably hexamer).

The protein resides in the secreted. Its subcellular location is the extracellular space. It localises to the apoplast. Its function is as follows. May play a role in plant defense. Probably has no oxalate oxidase activity even if the active site is conserved. This Arabidopsis thaliana (Mouse-ear cress) protein is Germin-like protein subfamily 1 member 13 (GLP6).